A 779-amino-acid polypeptide reads, in one-letter code: Endonuclease MutS2 (779 aa).

Residue 328-335 (GPNTGGKT) coordinates ATP. A Smr domain is found at 704–779 (LDLRGKRYEE…GSGATIVTLG (76 aa)).

This sequence belongs to the DNA mismatch repair MutS family. MutS2 subfamily. In terms of assembly, homodimer. Binds to stalled ribosomes, contacting rRNA.

Endonuclease that is involved in the suppression of homologous recombination and thus may have a key role in the control of bacterial genetic diversity. Functionally, acts as a ribosome collision sensor, splitting the ribosome into its 2 subunits. Detects stalled/collided 70S ribosomes which it binds and splits by an ATP-hydrolysis driven conformational change. Acts upstream of the ribosome quality control system (RQC), a ribosome-associated complex that mediates the extraction of incompletely synthesized nascent chains from stalled ribosomes and their subsequent degradation. Probably generates substrates for RQC. The protein is Endonuclease MutS2 of Streptococcus pyogenes serotype M1.